A 378-amino-acid chain; its full sequence is tRNA-specific 2-thiouridylase MnmA (378 aa).

ATP is bound by residues 9-16 (GVSGGVDS) and Met35. The tract at residues 94–96 (NPD) is interaction with target base in tRNA. Residue Cys99 is the Nucleophile of the active site. The cysteines at positions 99 and 195 are disulfide-linked. ATP is bound at residue Gly123. The interval 145 to 147 (KDQ) is interaction with tRNA. Cys195 serves as the catalytic Cysteine persulfide intermediate. The segment at 307 to 308 (RY) is interaction with tRNA.

This sequence belongs to the MnmA/TRMU family.

The protein localises to the cytoplasm. It carries out the reaction S-sulfanyl-L-cysteinyl-[protein] + uridine(34) in tRNA + AH2 + ATP = 2-thiouridine(34) in tRNA + L-cysteinyl-[protein] + A + AMP + diphosphate + H(+). Its function is as follows. Catalyzes the 2-thiolation of uridine at the wobble position (U34) of tRNA, leading to the formation of s(2)U34. This Xanthomonas oryzae pv. oryzae (strain PXO99A) protein is tRNA-specific 2-thiouridylase MnmA.